The following is a 247-amino-acid chain: Ribonuclease PH (247 aa).

Phosphate-binding positions include Arg-90 and 128 to 130; that span reads GTR.

The protein belongs to the RNase PH family. As to quaternary structure, homohexameric ring arranged as a trimer of dimers.

The catalysed reaction is tRNA(n+1) + phosphate = tRNA(n) + a ribonucleoside 5'-diphosphate. Its function is as follows. Phosphorolytic 3'-5' exoribonuclease that plays an important role in tRNA 3'-end maturation. Removes nucleotide residues following the 3'-CCA terminus of tRNAs; can also add nucleotides to the ends of RNA molecules by using nucleoside diphosphates as substrates, but this may not be physiologically important. Probably plays a role in initiation of 16S rRNA degradation (leading to ribosome degradation) during starvation. This is Ribonuclease PH from Synechococcus sp. (strain CC9605).